Reading from the N-terminus, the 211-residue chain is Putative ATP-dependent Clp protease proteolytic subunit-like (211 aa).

Positions 1-24 (MTRPSARHVLPEFTERTSAGTRTS) are disordered. His-129 is a catalytic residue.

This sequence belongs to the peptidase S14 family.

In terms of biological role, has lost one of the conserved residue (Ser) proposed to be part of the active site. Therefore it could be inactive. This Streptomyces coelicolor (strain ATCC BAA-471 / A3(2) / M145) protein is Putative ATP-dependent Clp protease proteolytic subunit-like.